A 1157-amino-acid polypeptide reads, in one-letter code: Folliculin-interacting protein 1 (1157 aa).

Residues 37–467 (FDPSQIRLIV…TVMPNGQPPI (431 aa)) enclose the uDENN FNIP1/2-type domain. 4 disordered regions span residues 92 to 120 (PGGD…CPKY), 616 to 665 (SQQE…TKVE), 769 to 796 (SPPT…NRDC), and 904 to 955 (VPHG…NYYG). Residues 95-111 (DSSSSLDSSINSSSSFS) show a composition bias toward low complexity. A cDENN FNIP1/2-type domain is found at 475–1083 (SSQSVDMLAK…VSNLLHSTLQ (609 aa)). Residues 651 to 664 (ADGHQPRTCQDTKV) show a composition bias toward basic and acidic residues. Basic and acidic residues predominate over residues 904-916 (VPHGDRENAEKKV). The dDENN FNIP1/2-type domain maps to 1093–1148 (FCVMHLEDRLQELYFKSKMLSEYLKGQMRVHVKELGVVLGIESSDLPLLAAVASTH).

It belongs to the FNIP family. In terms of assembly, homodimer and homomultimer. Heterodimer and heteromultimer with FNIP2. Component of the lysosomal folliculin complex (LFC).

It is found in the lysosome membrane. It localises to the cytoplasm. The protein localises to the cytosol. Binding partner of the GTPase-activating protein FLCN: involved in the cellular response to amino acid availability by regulating the non-canonical mTORC1 signaling cascade controlling the MiT/TFE factors TFEB and TFE3. Required to promote FLCN recruitment to lysosomes and interaction with Rag GTPases, leading to activation of the non-canonical mTORC1 signaling. In low-amino acid conditions, component of the lysosomal folliculin complex (LFC) on the membrane of lysosomes, which inhibits the GTPase-activating activity of FLCN, thereby inactivating mTORC1 and promoting nuclear translocation of TFEB and TFE3. Upon amino acid restimulation, disassembly of the LFC complex liberates the GTPase-activating activity of FLCN, leading to activation of mTORC1 and subsequent inactivation of TFEB and TFE3. In addition to its role in mTORC1 signaling, also acts as a co-chaperone of HSP90AA1/Hsp90: inhibits the ATPase activity of HSP90AA1/Hsp90, leading to activate both kinase and non-kinase client proteins of HSP90AA1/Hsp90. Acts as a scaffold to load client protein FLCN onto HSP90AA1/Hsp90. This Gallus gallus (Chicken) protein is Folliculin-interacting protein 1.